Here is a 55-residue protein sequence, read N- to C-terminus: Large ribosomal subunit protein bL33 (55 aa).

This sequence belongs to the bacterial ribosomal protein bL33 family.

This Maricaulis maris (strain MCS10) (Caulobacter maris) protein is Large ribosomal subunit protein bL33.